A 447-amino-acid polypeptide reads, in one-letter code: UDP-glucosyl transferase 79T1 (447 aa).

Residue histidine 18 is the Proton acceptor of the active site. The active-site Charge relay is the aspartate 116. UDP is bound by residues serine 265, tryptophan 323, valine 324, histidine 341, threonine 346, and glutamate 349.

Belongs to the UDP-glycosyltransferase family. Mainly expressed in flowers, flower buds and young leaves, and, to a lesser extent, in old leaves, stems and roots.

It participates in secondary metabolite biosynthesis; terpenoid biosynthesis. Functionally, component of the oleanane-type triterpene saponins (e.g. saponarioside A and saponarioside B) biosynthetic pathway, leading to the production of natural products with detergent properties used as traditional sources of soap. A glycosyltransferase that mediates the conversion of QA-triF to QA-triFR via the elongation of the C-28 sugar chain with a deoxyhexose on the D-fucose moiety. In Saponaria officinalis (Common soapwort), this protein is UDP-glucosyl transferase 79T1.